A 319-amino-acid chain; its full sequence is Transcriptional regulator LsrR (319 aa).

Positions 32-55 (QSEISERLGLTRLKVSRLLEKGHQ) form a DNA-binding region, H-T-H motif.

Belongs to the SorC transcriptional regulatory family.

It is found in the cytoplasm. With respect to regulation, inactivated by phosphorylated autoinducer-2 (phospho-AI-2). Phospho-AI-2 acts by binding to LsrR, which is then unable to bind to the promoter regions, allowing the transcription of the target genes. Functionally, transcriptional regulator that represses the expression of the lsr operon in the absence of the quorum-sensing signaling molecule autoinducer 2 (AI-2). It also represses the expression of the lsrRK operon. Acts by binding to the intergenic region between the lsr operon and lsrR. In the presence of phosphorylated autoinducer-2 (phospho-AI-2), LsrR is inactivated, leading to the transcription of the genes. The protein is Transcriptional regulator LsrR (lsrR) of Salmonella choleraesuis (strain SC-B67).